The chain runs to 57 residues: Small ribosomal subunit protein bS21 (57 aa).

This sequence belongs to the bacterial ribosomal protein bS21 family.

This Geobacillus kaustophilus (strain HTA426) protein is Small ribosomal subunit protein bS21.